Reading from the N-terminus, the 119-residue chain is Ghilanten (119 aa).

At Q1 the chain carries Pyrrolidone carboxylic acid. Intrachain disulfides connect C8–C19, C13–C26, C28–C48, C33–C51, C37–C53, C62–C73, C67–C80, C82–C103, C88–C106, and C92–C108. One can recognise an Antistasin-like 1 domain in the interval 28–53 (CPEVRCRVYCSHGFQRSRYGCEVCRC). The Antistasin-like 2 domain maps to 83–108 (KIDINCRKTCPNGLKRDKLGCEYCEC). Heparin-binding positions include 97 to 100 (KRDK) and 111 to 118 (KRKLVPRL).

Belongs to the protease inhibitor I15 (antistasin) family.

Its subcellular location is the secreted. Functionally, this highly disulfide-bonded protein is a potent inhibitor of factor Xa. May have therapeutic utility as an anticoagulant. Also exhibits a strong metastatic activity. The protein is Ghilanten of Haementeria ghilianii (Amazon leech).